The chain runs to 1462 residues: Trifunctional nucleotide phosphoesterase protein YfkN (1462 aa).

The signal sequence occupies residues 1 to 35 (MRIQKRRTHVENILRILLPPIMILSLILPTPPIHA). Residues 36-623 (EESAAPQVHL…GTNLTFESSL (588 aa)) form a 2',3'-cyclic nucleotide 2'-phosphodiesterase/3'-nucleotidase region. Residues Asp-52, His-54, Asp-97, Asn-141, His-249, His-282, and His-284 each contribute to the a divalent metal cation site. Residues Tyr-458 and 561-567 (YRASGGG) contribute to the a ribonucleoside 3'-phosphate site. The tract at residues 624 to 1427 (LAKPFADKAD…GPAGGLLPDT (804 aa)) is 5'-nucleotidase. 7 residues coordinate a divalent metal cation: Asp-676, His-678, Asp-708, Asn-740, His-872, His-895, and His-897. Residues Phe-1047 and 1127–1133 (FVGAGGD) each bind a ribonucleoside 5'-phosphate. Positions 1350 to 1422 (ILNSGSNNKP…GSGTDGPAGG (73 aa)) are disordered. The segment covering 1405-1421 (GSGGNGSGGSGTDGPAG) has biased composition (gly residues). Positions 1424 to 1428 (LPDTA) match the LPXTG sorting signal motif. A Pentaglycyl murein peptidoglycan amidated threonine modification is found at Thr-1427. Positions 1428 to 1462 (ATSMYSILLAGFLISALGTAMYLHQRRKQNRANQA) are cleaved as a propeptide — removed by sortase.

It belongs to the 5'-nucleotidase family. It depends on a divalent metal cation as a cofactor.

The protein resides in the secreted. It localises to the cell wall. It catalyses the reaction a nucleoside 2',3'-cyclic phosphate + H2O = a nucleoside 3'-phosphate + H(+). The catalysed reaction is a ribonucleoside 3'-phosphate + H2O = a ribonucleoside + phosphate. The enzyme catalyses a ribonucleoside 5'-phosphate + H2O = a ribonucleoside + phosphate. Functionally, catalyzes the release of inorganic phosphate from 2',3'-cyclic nucleotides through consecutive 2',3'-phosphodiesterase and 3'- (or 2') nucleotidase activities. Also possesses a 5'-nucleotidase activity. Does not catalyze the release of inorganic phosphate from 3',5'-cyclic nucleotides. Probably plays a role in the cellular reprocessing of nucleotides present in the medium, under conditions of phosphate shortage. The sequence is that of Trifunctional nucleotide phosphoesterase protein YfkN (yfkN) from Bacillus subtilis (strain 168).